Consider the following 390-residue polypeptide: GLH-binding kinase 1 (390 aa).

In terms of domain architecture, Protein kinase spans 38-338 (YVNLSFLNAG…VEDALNHPYV (301 aa)). ATP is bound by residues 44 to 52 (LNAGAQGTV) and K67. D164 serves as the catalytic Proton acceptor. Residue S198 is modified to Phosphoserine. Residue Y200 is modified to Phosphotyrosine.

Belongs to the protein kinase superfamily. CMGC Ser/Thr protein kinase family. MAP kinase subfamily. As to quaternary structure, interacts with glh-1, glh-2 (via C-terminus), glh-3 (via C-terminus) and glh-4 (via C-terminus). Interacts with csn-5; the interaction may prevent glh-1 degradation induced by kgb-1. Interacts with fos-1. Requires Mg(2+) as cofactor. Post-translationally, may be phosphorylated by mek-1 on Ser-198 and/or Tyr-200. Phosphorylation is induced upon Cu(2+) and arsenite-mediated cell stimulation and by fasting. Expressed in somatic and germline tissues.

It localises to the cytoplasm. It catalyses the reaction L-seryl-[protein] + ATP = O-phospho-L-seryl-[protein] + ADP + H(+). The catalysed reaction is L-threonyl-[protein] + ATP = O-phospho-L-threonyl-[protein] + ADP + H(+). Its activity is regulated as follows. Activated by mek-1 mediated phosphorylation. No differences in basal activation between larvae and adults. Inhibited by phosphatase vhp-1. Its function is as follows. Mitogen-activated protein kinase which is an essential component of the JNK pathway composed of mlk-1, mek-1 and kgb-1. Phosphorylates the transcription factor fos-1 which prevents fos-1 dimerization and promoter binding and results in activation of target genes including F53A9.2/kreg-1 and lys-3/kreg-2. Phosphorylates jun-1 and activates the AP-1 transcription factor which is a heterodimer of jun-1 and fos-1. Phosphorylates glh-1 in vitro which may play a role in controlling glh-1 protein levels in the germline by targeting it for degradation by the proteasome. Required for oogenesis and probably also for spermatogenesis. Involved in the response to environmental stress such as heavy metals, infection and protein folding stress in an age-dependent manner. In larvae, has a protective role which becomes detrimental in adults. May control susceptibility to infection, heavy metal stress and premature lethality by regulating daf-16 cellular localization. Involved in the transcriptional response to bacterial pore-forming toxins and to fasting. Required for fasting-induced longevity. Involved in axon regeneration after injury downstream of tyrosine receptor svh-2. The chain is GLH-binding kinase 1 from Caenorhabditis elegans.